The primary structure comprises 301 residues: Peroxisome assembly protein 26 (301 aa).

At 1–246 (MKNDSSTSAA…DAAASHLLSQ (246 aa)) the chain is on the cytoplasmic side. The chain crosses the membrane as a helical; Signal-anchor for type II membrane protein span at residues 247–263 (PFKKSLLAALILCLLVL). The Peroxisomal portion of the chain corresponds to 264 to 301 (RFDPATPSSLPFLYQLAHLFRRIQKATLSRLYPLALRD).

Belongs to the peroxin-26 family. Interacts directly with PEX6 via its cytoplasmic domain. Interacts indirectly with PEX1, via its interaction with PEX6.

It localises to the peroxisome membrane. In terms of biological role, peroxisomal docking factor that anchors PEX1 and PEX6 to peroxisome membranes. It is therefore required for the formation of the PEX1-PEX6 AAA ATPase complex, a complex that mediates the extraction of the PEX5 receptor from peroxisomal membrane. This chain is Peroxisome assembly protein 26 (Pex26), found in Cricetulus griseus (Chinese hamster).